The primary structure comprises 101 residues: Protein RnfH (101 aa).

This sequence belongs to the UPF0125 (RnfH) family.

The sequence is that of Protein RnfH from Coxiella burnetii (strain RSA 331 / Henzerling II).